The sequence spans 93 residues: Large ribosomal subunit protein uL23cz/uL23cy (93 aa).

The protein belongs to the universal ribosomal protein uL23 family. Part of the 50S ribosomal subunit.

It localises to the plastid. Its subcellular location is the chloroplast. In terms of biological role, binds to 23S rRNA. This chain is Large ribosomal subunit protein uL23cz/uL23cy (rpl23-A), found in Drimys granadensis.